The sequence spans 394 residues: Na(+)/H(+) antiporter NhaA (394 aa).

The next 11 helical transmembrane spans lie at 14-34 (AGGL…NSAL), 59-79 (LLLW…GLEV), 95-115 (VFPA…YLLF), 125-145 (GWAI…ALLG), 154-174 (VFLL…IALF), 179-199 (VSLQ…YMNW), 213-233 (LVLW…GVIV), 254-274 (GLHP…NAGV), 292-312 (IATG…WLAV), 328-348 (IFAV…IASL), and 363-383 (LGIL…LRLV).

The protein belongs to the NhaA Na(+)/H(+) (TC 2.A.33) antiporter family.

Its subcellular location is the cell inner membrane. It carries out the reaction Na(+)(in) + 2 H(+)(out) = Na(+)(out) + 2 H(+)(in). Functionally, na(+)/H(+) antiporter that extrudes sodium in exchange for external protons. The polypeptide is Na(+)/H(+) antiporter NhaA (Yersinia pseudotuberculosis serotype IB (strain PB1/+)).